The following is a 61-amino-acid chain: Large ribosomal subunit protein uL30 (61 aa).

It belongs to the universal ribosomal protein uL30 family. As to quaternary structure, part of the 50S ribosomal subunit.

In Thermosipho melanesiensis (strain DSM 12029 / CIP 104789 / BI429), this protein is Large ribosomal subunit protein uL30.